A 161-amino-acid chain; its full sequence is AP-1 complex subunit sigma-1 (161 aa).

Belongs to the adaptor complexes small subunit family. Adaptor protein complex 1 (AP-1) is a heterotetramer composed of two large adaptins (gamma-type subunit and beta-type subunit), a medium adaptin (mu-type subunit) and a small adaptin (sigma-type subunit). Expressed in seedlings, roots, stems, leaves, flowers and siliques (developing fruits and seeds).

The protein localises to the golgi apparatus. The protein resides in the cytoplasmic vesicle. It localises to the clathrin-coated vesicle membrane. Its function is as follows. Subunit of clathrin-associated adaptor protein complex 1 that plays a role in protein sorting at the trans-Golgi network and early endosomes (TGN/EE). The AP complexes mediate the recruitment of clathrin to membranes and the recognition of sorting signals within the cytosolic tails of transmembrane cargo molecules. The chain is AP-1 complex subunit sigma-1 (AAP19-1) from Arabidopsis thaliana (Mouse-ear cress).